We begin with the raw amino-acid sequence, 750 residues long: Serine/threonine-protein kinase GE16371 (750 aa).

Doublecortin domains are found at residues 159–245 and 315–398; these read LRIK…VEYN and RIVT…AEDF. Positions 479–737 constitute a Protein kinase domain; sequence YTLGKIIGDG…SEDILDHYWT (259 aa). Residues 485-493 and lysine 508 contribute to the ATP site; that span reads IGDGNFAIV. The active-site Proton acceptor is aspartate 600.

Belongs to the protein kinase superfamily. CAMK Ser/Thr protein kinase family. CaMK subfamily.

The enzyme catalyses L-seryl-[protein] + ATP = O-phospho-L-seryl-[protein] + ADP + H(+). It carries out the reaction L-threonyl-[protein] + ATP = O-phospho-L-threonyl-[protein] + ADP + H(+). This chain is Serine/threonine-protein kinase GE16371, found in Drosophila yakuba (Fruit fly).